Consider the following 112-residue polypeptide: MAM and fibronectin type III domain-containing protein 2 (112 aa).

In terms of tissue distribution, component of the acid-insoluble and acid-soluble organic matrix of the aragonitic skeleton (at protein level).

The protein localises to the secreted. This chain is MAM and fibronectin type III domain-containing protein 2, found in Acropora millepora (Staghorn coral).